The sequence spans 192 residues: Large ribosomal subunit protein uL10 (192 aa).

It belongs to the universal ribosomal protein uL10 family. In terms of assembly, part of the ribosomal stalk of the 50S ribosomal subunit. The N-terminus interacts with L11 and the large rRNA to form the base of the stalk. The C-terminus forms an elongated spine to which L12 dimers bind in a sequential fashion forming a multimeric L10(L12)X complex.

Its function is as follows. Forms part of the ribosomal stalk, playing a central role in the interaction of the ribosome with GTP-bound translation factors. The polypeptide is Large ribosomal subunit protein uL10 (Gloeobacter violaceus (strain ATCC 29082 / PCC 7421)).